The sequence spans 252 residues: Fructose-1,6-bisphosphatase/inositol-1-monophosphatase (252 aa).

The Mg(2+) site is built by Asp38, Thr40, Glu67, Asp82, Leu84, and Asp85. Substrate contacts are provided by residues 85–87 (DGT), Arg167, Ala172, and Arg191. Position 200 (Asp200) interacts with Mg(2+).

Belongs to the inositol monophosphatase superfamily. FBPase class 4 family. In terms of assembly, homodimer. Mg(2+) serves as cofactor. Mn(2+) is required as a cofactor.

It catalyses the reaction beta-D-fructose 1,6-bisphosphate + H2O = beta-D-fructose 6-phosphate + phosphate. It carries out the reaction a myo-inositol phosphate + H2O = myo-inositol + phosphate. Both FBPase and IMPase activities are inhibited by Ca(2+). In contrast to mammalian I-1-P phosphatases, is only very weakly inhibited by Li(+) (with an IC(50) of about 290 mM). Phosphatase with broad specificity; it can dephosphorylate fructose 1,6-bisphosphate, both D and L isomers of inositol-1-phosphate (I-1-P), 2'-AMP, pNPP, inositol-2-phosphate, beta-glycerol phosphate, and alpha-D-glucose-1-phosphate. Cannot hydrolyze glucose-6-phosphate and fructose-6-phosphate. May be involved in the biosynthesis of a unique osmolyte, di-myo-inositol 1,1-phosphate. In Archaeoglobus fulgidus (strain ATCC 49558 / DSM 4304 / JCM 9628 / NBRC 100126 / VC-16), this protein is Fructose-1,6-bisphosphatase/inositol-1-monophosphatase (suhB).